The chain runs to 107 residues: U1-lycotoxin-Ls1c (107 aa).

The N-terminal stretch at 1–20 (MMKVLVVVALLVTLISYSSS) is a signal peptide. Residues 21-41 (EGIDDLEADELLSLMANEQTR) constitute a propeptide that is removed on maturation. Disulfide bonds link Cys-44/Cys-59, Cys-51/Cys-68, Cys-58/Cys-86, and Cys-70/Cys-84.

This sequence belongs to the neurotoxin 19 (CSTX) family. 04 (U1-Lctx) subfamily. As to expression, expressed by the venom gland.

It is found in the secreted. The sequence is that of U1-lycotoxin-Ls1c from Lycosa singoriensis (Wolf spider).